A 173-amino-acid chain; its full sequence is Probable chemoreceptor glutamine deamidase CheD (173 aa).

The protein belongs to the CheD family.

The enzyme catalyses L-glutaminyl-[protein] + H2O = L-glutamyl-[protein] + NH4(+). Probably deamidates glutamine residues to glutamate on methyl-accepting chemotaxis receptors (MCPs), playing an important role in chemotaxis. In Haloarcula marismortui (strain ATCC 43049 / DSM 3752 / JCM 8966 / VKM B-1809) (Halobacterium marismortui), this protein is Probable chemoreceptor glutamine deamidase CheD.